Reading from the N-terminus, the 511-residue chain is Bifunctional purine biosynthesis protein PurH (511 aa).

The MGS-like domain occupies 1 to 145; the sequence is MKKRALVSVS…KNHKFVSVIV (145 aa).

It belongs to the PurH family.

The enzyme catalyses (6R)-10-formyltetrahydrofolate + 5-amino-1-(5-phospho-beta-D-ribosyl)imidazole-4-carboxamide = 5-formamido-1-(5-phospho-D-ribosyl)imidazole-4-carboxamide + (6S)-5,6,7,8-tetrahydrofolate. It carries out the reaction IMP + H2O = 5-formamido-1-(5-phospho-D-ribosyl)imidazole-4-carboxamide. The protein operates within purine metabolism; IMP biosynthesis via de novo pathway; 5-formamido-1-(5-phospho-D-ribosyl)imidazole-4-carboxamide from 5-amino-1-(5-phospho-D-ribosyl)imidazole-4-carboxamide (10-formyl THF route): step 1/1. It functions in the pathway purine metabolism; IMP biosynthesis via de novo pathway; IMP from 5-formamido-1-(5-phospho-D-ribosyl)imidazole-4-carboxamide: step 1/1. This is Bifunctional purine biosynthesis protein PurH from Bacillus cereus (strain ATCC 10987 / NRS 248).